We begin with the raw amino-acid sequence, 200 residues long: Cytochrome c biogenesis ATP-binding export protein CcmA (200 aa).

An ABC transporter domain is found at 1 to 200 (MRLSGNGLRC…ARELRIGGAA (200 aa)). 35 to 42 (GPNGAGKT) is a binding site for ATP.

It belongs to the ABC transporter superfamily. CcmA exporter (TC 3.A.1.107) family. In terms of assembly, the complex is composed of two ATP-binding proteins (CcmA) and two transmembrane proteins (CcmB).

It localises to the cell inner membrane. It carries out the reaction heme b(in) + ATP + H2O = heme b(out) + ADP + phosphate + H(+). In terms of biological role, part of the ABC transporter complex CcmAB involved in the biogenesis of c-type cytochromes; once thought to export heme, this seems not to be the case, but its exact role is uncertain. Responsible for energy coupling to the transport system. The sequence is that of Cytochrome c biogenesis ATP-binding export protein CcmA from Nitrobacter winogradskyi (strain ATCC 25391 / DSM 10237 / CIP 104748 / NCIMB 11846 / Nb-255).